The primary structure comprises 65 residues: MMIYGLIACLIFVTSSIASPPITEDKSFNSVEVLVSLFRDDQKDYTVTSQFNNYTIDTKDWTIHT.

It belongs to the poxviridae C13 protein family.

The sequence is that of Protein C13 from Vaccinia virus (strain Copenhagen) (VACV).